We begin with the raw amino-acid sequence, 203 residues long: Pyridoxal 5'-phosphate synthase subunit PdxT (203 aa).

54–56 (GES) is a binding site for L-glutamine. Cysteine 86 acts as the Nucleophile in catalysis. Residues arginine 113 and 141–142 (IR) contribute to the L-glutamine site. Residues histidine 177 and glutamate 179 each act as charge relay system in the active site.

It belongs to the glutaminase PdxT/SNO family. As to quaternary structure, in the presence of PdxS, forms a dodecamer of heterodimers. Only shows activity in the heterodimer.

It carries out the reaction aldehydo-D-ribose 5-phosphate + D-glyceraldehyde 3-phosphate + L-glutamine = pyridoxal 5'-phosphate + L-glutamate + phosphate + 3 H2O + H(+). The enzyme catalyses L-glutamine + H2O = L-glutamate + NH4(+). Its pathway is cofactor biosynthesis; pyridoxal 5'-phosphate biosynthesis. In terms of biological role, catalyzes the hydrolysis of glutamine to glutamate and ammonia as part of the biosynthesis of pyridoxal 5'-phosphate. The resulting ammonia molecule is channeled to the active site of PdxS. This Halobacterium salinarum (strain ATCC 29341 / DSM 671 / R1) protein is Pyridoxal 5'-phosphate synthase subunit PdxT.